A 520-amino-acid polypeptide reads, in one-letter code: MSAIAIIDFGSQFTQLIARQVRGMGVYCEIFPSNISFETISKFNGFILSGGPQSVNDDCSETSRVVHEIIKLNEATSVPILGICYGQQLICHYFGAKVKESFKQEFGRTKIKILKESPIVKDTWDVNSEVDVLMNHADSVDTIPQGFTVIASGVINQTIAMIVNEQRKIYCTQFHPEVKPTTNGSKLLSNFLDIANCKRDWTMKSFIEEQKEKIKNVVGEKKVIAAVSGGVDSSVAAALTHKAIGKQLNCIFIDTGLLRKNQTIAMLKEIPINYVDKSNLFLSRLKGITDPEEKRKIIGNTFIEVFEEEAKKIGDVDFLMQGTIYSDVVESGHASDNTSTIKSHHNVGGLPEKMNLKLVEPLRYLFKDEVRLLGKEIGLSDEIIFQHPFPGPGLAVRIISEVDKEKVQILQEVDEIYINTMKNYDLYDKIWQAFAVLLPIKTVGVMGDGRTYGYVCALRAVTSSDGMTADAFPFEDKDQHLLVFWDFLRNVGSIIVNNVPGVNRVVYDITSKPPATIEWE.

Positions 3 to 200 (AIAIIDFGSQ…FLDIANCKRD (198 aa)) constitute a Glutamine amidotransferase type-1 domain. Residue C84 is the Nucleophile of the active site. Active-site residues include H175 and E177. The GMPS ATP-PPase domain maps to 201–386 (WTMKSFIEEQ…IGLSDEIIFQ (186 aa)). 228-234 (SGGVDSS) provides a ligand contact to ATP.

Homodimer.

It carries out the reaction XMP + L-glutamine + ATP + H2O = GMP + L-glutamate + AMP + diphosphate + 2 H(+). The protein operates within purine metabolism; GMP biosynthesis; GMP from XMP (L-Gln route): step 1/1. Its function is as follows. Catalyzes the synthesis of GMP from XMP. This Wolbachia pipientis wMel protein is GMP synthase [glutamine-hydrolyzing].